Here is a 438-residue protein sequence, read N- to C-terminus: Probable chaperone protein ClpB 1 (438 aa).

Positions 1–94 (MNTADTRQRL…NNRKIEARQA (94 aa)) form a coiled coil. Residues 1–118 (MNTADTRQRL…IADIVSRWTG (118 aa)) are linker. The NBD2 stretch occupies residues 128-345 (ERQKLLGIES…RIDEVILFTP (218 aa)). 178–185 (GPTGVGKT) provides a ligand contact to ATP. The interval 346 to 438 (LTRENLREIV…ENDAIVMKKK (93 aa)) is C-terminal.

This sequence belongs to the ClpA/ClpB family. In terms of assembly, homohexamer. The oligomerization is ATP-dependent.

It is found in the cytoplasm. Its function is as follows. Part of a stress-induced multi-chaperone system, it is involved in the recovery of the cell from heat-induced damage, in cooperation with DnaK, DnaJ and GrpE. Acts before DnaK, in the processing of protein aggregates. Protein binding stimulates the ATPase activity; ATP hydrolysis unfolds the denatured protein aggregates, which probably helps expose new hydrophobic binding sites on the surface of ClpB-bound aggregates, contributing to the solubilization and refolding of denatured protein aggregates by DnaK. In Chlorobaculum tepidum (strain ATCC 49652 / DSM 12025 / NBRC 103806 / TLS) (Chlorobium tepidum), this protein is Probable chaperone protein ClpB 1 (clpB1).